Here is a 345-residue protein sequence, read N- to C-terminus: Phosphoribosylformylglycinamidine cyclo-ligase (345 aa).

This sequence belongs to the AIR synthase family.

Its subcellular location is the cytoplasm. It carries out the reaction 2-formamido-N(1)-(5-O-phospho-beta-D-ribosyl)acetamidine + ATP = 5-amino-1-(5-phospho-beta-D-ribosyl)imidazole + ADP + phosphate + H(+). It participates in purine metabolism; IMP biosynthesis via de novo pathway; 5-amino-1-(5-phospho-D-ribosyl)imidazole from N(2)-formyl-N(1)-(5-phospho-D-ribosyl)glycinamide: step 2/2. The protein is Phosphoribosylformylglycinamidine cyclo-ligase of Histophilus somni (strain 2336) (Haemophilus somnus).